The sequence spans 148 residues: Phospholipase A2-alpha (148 aa).

The N-terminal stretch at 1 to 20 (MAAPIILFSFLLFFSVSVSA) is a signal peptide. 6 disulfide bridges follow: Cys38/Cys66, Cys42/Cys72, Cys47/Cys122, Cys59/Cys79, Cys78/Cys105, and Cys85/Cys98. Residues Tyr58, Gly60, and Tyr63 each contribute to the Ca(2+) site. His82 is a catalytic residue. Asp83 contacts Ca(2+).

This sequence belongs to the phospholipase A2 family. As to quaternary structure, interacts with MYB30. The cofactor is Ca(2+). As to expression, ubiquitous but expressed at a low level.

It is found in the secreted. The protein localises to the golgi apparatus. The protein resides in the cytoplasmic vesicle. Its subcellular location is the nucleus. The catalysed reaction is a 1,2-diacyl-sn-glycero-3-phosphocholine + H2O = a 1-acyl-sn-glycero-3-phosphocholine + a fatty acid + H(+). PA2 catalyzes the calcium-dependent hydrolysis of the 2-acyl groups in 3-sn-phosphoglycerides. Releases lysophospholipids (LPLs) and free fatty acids (FFAs) from membrane phospholipids in response to hormones and other external stimuli. Modulates the trafficking of PIN proteins to the plasma membrane. Negatively regulates MYB30 transcriptional activity and hypersensitive response control. This chain is Phospholipase A2-alpha, found in Arabidopsis thaliana (Mouse-ear cress).